Consider the following 178-residue polypeptide: Large ribosomal subunit protein uL5 (178 aa).

The protein belongs to the universal ribosomal protein uL5 family. Part of the 50S ribosomal subunit; part of the 5S rRNA/L5/L18/L25 subcomplex. Contacts the 5S rRNA and the P site tRNA. Forms a bridge to the 30S subunit in the 70S ribosome.

In terms of biological role, this is one of the proteins that bind and probably mediate the attachment of the 5S RNA into the large ribosomal subunit, where it forms part of the central protuberance. In the 70S ribosome it contacts protein S13 of the 30S subunit (bridge B1b), connecting the 2 subunits; this bridge is implicated in subunit movement. Contacts the P site tRNA; the 5S rRNA and some of its associated proteins might help stabilize positioning of ribosome-bound tRNAs. The sequence is that of Large ribosomal subunit protein uL5 from Psychrobacter cryohalolentis (strain ATCC BAA-1226 / DSM 17306 / VKM B-2378 / K5).